We begin with the raw amino-acid sequence, 1465 residues long: DNA polymerase III PolC-type (1465 aa).

The Exonuclease domain occupies 427 to 583 (YVVFDVETTG…YDAEATGRLL (157 aa)).

It belongs to the DNA polymerase type-C family. PolC subfamily.

The protein resides in the cytoplasm. It carries out the reaction DNA(n) + a 2'-deoxyribonucleoside 5'-triphosphate = DNA(n+1) + diphosphate. Its function is as follows. Required for replicative DNA synthesis. This DNA polymerase also exhibits 3' to 5' exonuclease activity. The protein is DNA polymerase III PolC-type of Streptococcus pyogenes serotype M12 (strain MGAS2096).